Here is a 347-residue protein sequence, read N- to C-terminus: Spermatogenesis associated 6-like protein (347 aa).

The interval 115-199 (SKSHGQRVQA…ENNLEHCSKK (85 aa)) is disordered. The segment covering 116–125 (KSHGQRVQAT) has biased composition (polar residues). Residues 153 to 166 (LHLHRPTQRNHGKS) are compositionally biased toward basic residues. Positions 170–183 (PGERKPPFVVRHVD) are enriched in basic and acidic residues. A phosphoserine mark is found at serine 218 and serine 221. The segment at 234-285 (ERIVLKSQPPPPVDSSESRKPSLSHQGDASLHTETSVTTSQLSRPPSPLNQP) is disordered. Positions 254–277 (PSLSHQGDASLHTETSVTTSQLSR) are enriched in polar residues.

Belongs to the SPATA6 family.

In Mus musculus (Mouse), this protein is Spermatogenesis associated 6-like protein (Spata6l).